A 245-amino-acid chain; its full sequence is D-aminoacyl-tRNA deacylase (245 aa).

This sequence belongs to the DtdA deacylase family. In terms of assembly, monomer. Zn(2+) is required as a cofactor.

It catalyses the reaction a D-aminoacyl-tRNA + H2O = a tRNA + a D-alpha-amino acid + H(+). It carries out the reaction glycyl-tRNA(Ala) + H2O = tRNA(Ala) + glycine + H(+). Its function is as follows. D-aminoacyl-tRNA deacylase with broad substrate specificity. By recycling D-aminoacyl-tRNA to D-amino acids and free tRNA molecules, this enzyme counteracts the toxicity associated with the formation of D-aminoacyl-tRNA entities in vivo. This Ignicoccus hospitalis (strain KIN4/I / DSM 18386 / JCM 14125) protein is D-aminoacyl-tRNA deacylase.